Consider the following 205-residue polypeptide: Rho GDP-dissociation inhibitor (205 aa).

Positions 1–11 (MSVNNEVSADQ) are enriched in polar residues. The interval 1–31 (MSVNNEVSADQHNPELEDDTFEHGPPVSLGE) is disordered. The residue at position 63 (Ser-63) is a Phosphoserine.

The protein belongs to the Rho GDI family.

Its subcellular location is the cytoplasm. The protein resides in the nucleus. Regulates the GDP/GTP exchange reaction of the Rho proteins by inhibiting the dissociation of GDP from them, and the subsequent binding of GTP to them. This is Rho GDP-dissociation inhibitor from Schizosaccharomyces pombe (strain 972 / ATCC 24843) (Fission yeast).